The chain runs to 757 residues: Centrosomal protein of 68 kDa (757 aa).

2 stretches are compositionally biased toward basic and acidic residues: residues 1–17 and 86–96; these read MALGEEKAEAEASEDTK and ANREPVAERSE. Disordered regions lie at residues 1–47, 67–158, 192–259, 311–480, 509–551, and 597–618; these read MALG…RLEA, WIGT…PSLA, QPSS…GGDA, PGPQ…ESDD, PTGD…SGDP, and LDRWPFSDPDVEGQLPRKGGEQ. Polar residues predominate over residues 125–144; that stretch reads LSSSEEFPQTLSLPRTTTIC. 2 stretches are compositionally biased toward low complexity: residues 192–206 and 224–240; these read QPSSCSISASSTGSS and VSSSLEPVVPQEPSSVV. The residue at position 332 (Ser-332) is a Phosphoserine; by PLK1. Positions 339-355 are enriched in polar residues; it reads FSVSPASTLKSPTNVSP. Basic and acidic residues-rich tracts occupy residues 405–432 and 439–456; these read GSRDARWERREPALRGAKDRLTIGKHLD and RTRDRGWPSPRPEREKRT. Polar residues predominate over residues 457-467; sequence SQSARRPTCTE. Phosphoserine occurs at positions 472 and 478. Positions 524–543 are enriched in low complexity; that stretch reads SDGPASFPSSSSQSQLPPGA.

As to quaternary structure, interacts with CNTLN; the interaction recruits CEP68 to the centrosome. Interacts with the SCF(FBXW11) complex which contains SKP1, CUL1 and FBXW11; the interaction is probably mediated by FBXW11 and the complex also contains CDK5RAP2 and PCNT. Also interacts with F-box protein BTRC. Interacts with serine/threonine-protein kinase PLK1; the interaction leads to phosphorylation of CEP68 and its subsequent degradation. Interacts with NEK2; the interaction leads to phosphorylation of CEP68. Phosphorylation by PLK1 is required for binding to BTRC in prometaphase. Phosphorylated directly or indirectly by NEK2. NEK2-mediated phosphorylation promotes CEP68 dissociation from the centrosome and its degradation at the onset of mitosis. In terms of processing, ubiquitinated and targeted for proteasomal degradation in early mitosis by the SCF(BTRC) and/or SCF(FBXW11) E3 ubiquitin-protein ligase complexes. Degradation is complete by prometaphase and is required for removal of CDK5RAP2 from the peripheral pericentriolar material and subsequent centriole separation.

The protein localises to the cytoplasm. Its subcellular location is the cytoskeleton. It localises to the microtubule organizing center. It is found in the centrosome. In terms of biological role, involved in maintenance of centrosome cohesion, probably as part of a linker structure which prevents centrosome splitting. Required for localization of CDK5RAP2 to the centrosome during interphase. Contributes to CROCC/rootletin filament formation. The sequence is that of Centrosomal protein of 68 kDa (CEP68) from Homo sapiens (Human).